Here is a 371-residue protein sequence, read N- to C-terminus: Protein disulfide isomerase-like 2-2 (371 aa).

The signal sequence occupies residues M1–A27. 2 Thioredoxin domains span residues A28–G143 and K147–G262. Active-site nucleophile residues include C64, C67, C183, and C186. Intrachain disulfides connect C64–C67 and C183–C186.

The protein belongs to the protein disulfide isomerase family.

The protein localises to the secreted. The enzyme catalyses Catalyzes the rearrangement of -S-S- bonds in proteins.. Functionally, acts as a protein-folding catalyst that interacts with nascent polypeptides to catalyze the formation, isomerization, and reduction or oxidation of disulfide bonds. May play a role in storage protein biogenesis. In Oryza sativa subsp. japonica (Rice), this protein is Protein disulfide isomerase-like 2-2 (PDIL2-2).